The chain runs to 254 residues: Uracil-DNA glycosylase (254 aa).

Catalysis depends on Asp-78, which acts as the Proton acceptor.

This sequence belongs to the uracil-DNA glycosylase (UDG) superfamily. UNG family.

The protein localises to the cytoplasm. The enzyme catalyses Hydrolyzes single-stranded DNA or mismatched double-stranded DNA and polynucleotides, releasing free uracil.. In terms of biological role, excises uracil residues from the DNA which can arise as a result of misincorporation of dUMP residues by DNA polymerase or due to deamination of cytosine. The chain is Uracil-DNA glycosylase from Bordetella petrii (strain ATCC BAA-461 / DSM 12804 / CCUG 43448).